The sequence spans 468 residues: Phosphomethylpyrimidine synthase (468 aa).

Substrate is bound by residues Asn-80, Met-109, Tyr-138, His-173, 193–195 (SRG), 234–237 (DGLR), and Glu-273. A Zn(2+)-binding site is contributed by His-277. Residue Tyr-300 coordinates substrate. His-341 contacts Zn(2+). 3 residues coordinate [4Fe-4S] cluster: Cys-421, Cys-424, and Cys-429.

Belongs to the ThiC family. Homodimer. [4Fe-4S] cluster is required as a cofactor.

The enzyme catalyses 5-amino-1-(5-phospho-beta-D-ribosyl)imidazole + S-adenosyl-L-methionine = 4-amino-2-methyl-5-(phosphooxymethyl)pyrimidine + CO + 5'-deoxyadenosine + formate + L-methionine + 3 H(+). Its pathway is cofactor biosynthesis; thiamine diphosphate biosynthesis. Its function is as follows. Catalyzes the synthesis of the hydroxymethylpyrimidine phosphate (HMP-P) moiety of thiamine from aminoimidazole ribotide (AIR) in a radical S-adenosyl-L-methionine (SAM)-dependent reaction. This Anaeromyxobacter sp. (strain Fw109-5) protein is Phosphomethylpyrimidine synthase.